A 44-amino-acid polypeptide reads, in one-letter code: Photosystem II reaction center protein K (44 aa).

Residues 1–7 (METLLLS) constitute a propeptide that is removed on maturation. A helical membrane pass occupies residues 23–43 (LPIIPVFFLLLAFVWQAAIGF).

The protein belongs to the PsbK family. PSII is composed of 1 copy each of membrane proteins PsbA, PsbB, PsbC, PsbD, PsbE, PsbF, PsbH, PsbI, PsbJ, PsbK, PsbL, PsbM, PsbT, PsbX, PsbY, PsbZ, Psb30/Ycf12, at least 3 peripheral proteins of the oxygen-evolving complex and a large number of cofactors. It forms dimeric complexes.

It localises to the plastid. The protein resides in the chloroplast thylakoid membrane. Functionally, one of the components of the core complex of photosystem II (PSII). PSII is a light-driven water:plastoquinone oxidoreductase that uses light energy to abstract electrons from H(2)O, generating O(2) and a proton gradient subsequently used for ATP formation. It consists of a core antenna complex that captures photons, and an electron transfer chain that converts photonic excitation into a charge separation. In Phaeodactylum tricornutum (strain CCAP 1055/1), this protein is Photosystem II reaction center protein K.